A 493-amino-acid chain; its full sequence is V-type proton ATPase subunit B (493 aa).

This sequence belongs to the ATPase alpha/beta chains family. As to quaternary structure, V-ATPase is a heteromultimeric enzyme composed of a peripheral catalytic V1 complex (main components: subunits A, B, C, D, E, and F) attached to an integral membrane V0 proton pore complex (main component: the proteolipid protein).

It is found in the cytoplasmic vesicle membrane. Its subcellular location is the endosome membrane. It localises to the contractile vacuole membrane. Vacuolar ATPase is responsible for acidifying a variety of intracellular compartments in eukaryotic cells. The B subunit is non-catalytic but combines with other subunits to form the catalytic complex. V-ATPase is responsible for energizing electrophoretic K(+)/2H(+) antiport by generating a transmembrane voltage of more than 200 mV. This is V-type proton ATPase subunit B (vatB) from Dictyostelium discoideum (Social amoeba).